Here is a 135-residue protein sequence, read N- to C-terminus: Large ribosomal subunit protein uL22c (135 aa).

It belongs to the universal ribosomal protein uL22 family. Part of the 50S ribosomal subunit.

It is found in the plastid. In terms of biological role, this protein binds specifically to 23S rRNA. Its function is as follows. The globular domain of the protein is located near the polypeptide exit tunnel on the outside of the subunit, while an extended beta-hairpin is found that lines the wall of the exit tunnel in the center of the 70S ribosome. In Cuscuta exaltata (Tall dodder), this protein is Large ribosomal subunit protein uL22c (rpl22).